A 649-amino-acid polypeptide reads, in one-letter code: UvrABC system protein C (649 aa).

A GIY-YIG domain is found at 12 to 91 (SSPGVYLMKS…IKQHRPKYNI (80 aa)). Positions 201–236 (NEVARLYRSKMNLASEQMRYEDAARYRDLLRAIEVT) constitute a UVR domain. Residues 603–649 (RLHGGPLPNPPPPGEGAMGDGSIPSPRNGVMDDSIPSPSGRGWPKAG) form a disordered region.

It belongs to the UvrC family. Interacts with UvrB in an incision complex.

It localises to the cytoplasm. In terms of biological role, the UvrABC repair system catalyzes the recognition and processing of DNA lesions. UvrC both incises the 5' and 3' sides of the lesion. The N-terminal half is responsible for the 3' incision and the C-terminal half is responsible for the 5' incision. This is UvrABC system protein C from Geobacter sp. (strain M21).